A 448-amino-acid polypeptide reads, in one-letter code: Protein ECM7 (448 aa).

The Cytoplasmic segment spans residues methionine 1–arginine 28. Residues leucine 29–serine 49 form a helical membrane-spanning segment. At proline 50–asparagine 204 the chain is on the extracellular side. A helical membrane pass occupies residues valine 205 to tryptophan 225. Residues tyrosine 226–asparagine 246 are Cytoplasmic-facing. Residues serine 247–valine 267 form a helical membrane-spanning segment. At asparagine 268–histidine 287 the chain is on the extracellular side. A helical transmembrane segment spans residues leucine 288 to leucine 308. Residues alanine 309 to phenylalanine 448 are Cytoplasmic-facing. Composition is skewed to polar residues over residues tyrosine 351–glycine 363 and valine 383–asparagine 406. 2 disordered regions span residues tyrosine 351–glutamate 411 and arginine 427–phenylalanine 448.

Its subcellular location is the membrane. Its function is as follows. May be involved in cell wall organization and biogenesis. This Saccharomyces cerevisiae (strain ATCC 204508 / S288c) (Baker's yeast) protein is Protein ECM7 (ECM7).